Here is a 325-residue protein sequence, read N- to C-terminus: Peroxidase RIP1 (325 aa).

Residues 1–21 (MASSSPCQIFLVFVMVTLVTS) form the signal peptide. Cystine bridges form between Cys-38–Cys-118, Cys-71–Cys-76, Cys-125–Cys-321, and Cys-206–Cys-231. Residue His-69 is the Proton acceptor of the active site. 5 residues coordinate Ca(2+): Asp-70, Val-73, Gly-75, Asp-77, and Ser-79. Residue Asn-87 is glycosylated (N-linked (GlcNAc...) asparagine). Pro-169 is a binding site for substrate. Asn-174 carries an N-linked (GlcNAc...) asparagine glycan. His-199 is a binding site for heme b. Position 200 (Thr-200) interacts with Ca(2+). N-linked (GlcNAc...) asparagine glycosylation occurs at Asn-215. Ca(2+) contacts are provided by Asp-244, Thr-246, and Glu-251.

It belongs to the peroxidase family. Classical plant (class III) peroxidase subfamily. Heme b is required as a cofactor. Requires Ca(2+) as cofactor. In terms of tissue distribution, expressed in the differentiating root epidermis following inoculation with the bacterial symbiont Sinorhizobium meliloti.

It is found in the secreted. The enzyme catalyses 2 a phenolic donor + H2O2 = 2 a phenolic radical donor + 2 H2O. Functionally, removal of H(2)O(2), oxidation of toxic reductants, biosynthesis and degradation of lignin, suberization, auxin catabolism, response to environmental stresses such as wounding, pathogen attack and oxidative stress. These functions might be dependent on each isozyme/isoform in each plant tissue. This chain is Peroxidase RIP1, found in Medicago truncatula (Barrel medic).